The chain runs to 361 residues: G2/mitotic-specific cyclin-B (361 aa).

Belongs to the cyclin family. Cyclin AB subfamily.

Essential for the control of the cell cycle at the G2/M (mitosis) transition. Interacts with the CDC2 protein kinase to form MPF. G2/M cyclins accumulate steadily during G2 and are abruptly destroyed at mitosis. In Hydra vulgaris (Hydra), this protein is G2/mitotic-specific cyclin-B.